Consider the following 217-residue polypeptide: GTP cyclohydrolase 1 (217 aa).

3 residues coordinate Zn(2+): C109, H112, and C180.

It belongs to the GTP cyclohydrolase I family. In terms of assembly, toroid-shaped homodecamer, composed of two pentamers of five dimers.

The catalysed reaction is GTP + H2O = 7,8-dihydroneopterin 3'-triphosphate + formate + H(+). It functions in the pathway cofactor biosynthesis; 7,8-dihydroneopterin triphosphate biosynthesis; 7,8-dihydroneopterin triphosphate from GTP: step 1/1. This Vibrio campbellii (strain ATCC BAA-1116) protein is GTP cyclohydrolase 1.